A 347-amino-acid chain; its full sequence is Merozoite surface protein P12 (347 aa).

A signal peptide (or 25) is located at residues 1 to 23 (MIKLSKKYCLGISFVLYILLSVC). 6-Cys domains follow at residues 27-172 (KNLT…IPSL) and 175-305 (KVKG…ISSS). Residue asparagine 28 is glycosylated (N-linked (GlcNAc...) asparagine). Cystine bridges form between cysteine 31/cysteine 53, cysteine 67/cysteine 138, and cysteine 81/cysteine 136. 6 N-linked (GlcNAc...) asparagine glycosylation sites follow: asparagine 147, asparagine 200, asparagine 228, asparagine 242, asparagine 265, and asparagine 322. 3 disulfide bridges follow: cysteine 179/cysteine 211, cysteine 225/cysteine 286, and cysteine 236/cysteine 284. Asparagine 322 carries the GPI-anchor amidated asparagine lipid modification. Positions 323–347 (SSFLTLSSYCAFITFIITSFLSFIL) are cleaved as a propeptide — removed in mature form.

As to quaternary structure, heterodimer; heterodimerizes with PF41. May form an antiparallel heterodimer with PF41.

The protein localises to the cell surface. The protein resides in the cell membrane. This chain is Merozoite surface protein P12 (PF12), found in Plasmodium falciparum.